The following is a 234-amino-acid chain: Proteasome subunit alpha type-2 (234 aa).

A2 carries the N-acetylalanine modification. Residue Y121 is modified to Phosphotyrosine.

This sequence belongs to the peptidase T1A family. The 26S proteasome consists of a 20S proteasome core and two 19S regulatory subunits. The 20S proteasome core is composed of 28 subunits that are arranged in four stacked rings, resulting in a barrel-shaped structure. The two end rings are each formed by seven alpha subunits, and the two central rings are each formed by seven beta subunits. The catalytic chamber with the active sites is on the inside of the barrel.

It is found in the cytoplasm. The protein localises to the nucleus. Functionally, the proteasome is a multicatalytic proteinase complex which is characterized by its ability to cleave peptides with Arg, Phe, Tyr, Leu, and Glu adjacent to the leaving group at neutral or slightly basic pH. The proteasome has an ATP-dependent proteolytic activity. PSMA2 may have a potential regulatory effect on another component(s) of the proteasome complex through tyrosine phosphorylation. The chain is Proteasome subunit alpha type-2 (psma2) from Carassius auratus (Goldfish).